Here is a 577-residue protein sequence, read N- to C-terminus: Methionine--tRNA ligase, mitochondrial (577 aa).

A 'HIGH' region motif is present at residues 25–37; it reads PIFYVNAAPHIGH. The 'KMSKS' region signature appears at 329–333; that stretch reads KMSKS. Lysine 332 is an ATP binding site.

Belongs to the class-I aminoacyl-tRNA synthetase family.

It localises to the mitochondrion matrix. It carries out the reaction tRNA(Met) + L-methionine + ATP = L-methionyl-tRNA(Met) + AMP + diphosphate. The protein is Methionine--tRNA ligase, mitochondrial (MSM1) of Candida albicans (Yeast).